The sequence spans 205 residues: Spermatogenesis-associated protein 24 (205 aa).

The stretch at 17-166 (LALDQLRDVI…QQKQIFRNHM (150 aa)) forms a coiled coil. Residues 138 to 185 (EDILNGKENEIKELQQVISQQKQIFRNHMSDFRIQKQQESYMAQVLDQ) are required for interaction with CBX5 and TBPL1. Positions 180–205 (AQVLDQKHKKASGTRQARSHQHPREK) are disordered. Residues 186–205 (KHKKASGTRQARSHQHPREK) are compositionally biased toward basic residues.

Belongs to the SPATA24 family. As to quaternary structure, homodimer. Interacts with CBX3, CBX5, GMNN, GTF2B, TBPL1 and the polycomb proteins PHCF2, RNF2 and SCMH1 but not with CBX1 or PCGF2.

It is found in the cytoplasm. It localises to the nucleus. The protein resides in the nucleolus. The protein localises to the nucleoplasm. Functionally, binds DNA with high affinity but does not bind to TATA boxes. Synergises with GMNN and TBP in activation of TATA box-containing promoters and with GMNN and TBPL1 in activation of the NF1 TATA-less promoter. May play a role in cytoplasm movement and removal during spermiogenesis. In Homo sapiens (Human), this protein is Spermatogenesis-associated protein 24 (SPATA24).